Here is a 153-residue protein sequence, read N- to C-terminus: Large ribosomal subunit protein uL13 (153 aa).

The protein belongs to the universal ribosomal protein uL13 family. Part of the 50S ribosomal subunit.

In terms of biological role, this protein is one of the early assembly proteins of the 50S ribosomal subunit, although it is not seen to bind rRNA by itself. It is important during the early stages of 50S assembly. This is Large ribosomal subunit protein uL13 from Chelativorans sp. (strain BNC1).